Consider the following 892-residue polypeptide: MSERAADDVRGEPRRAAAAAGGAAAAAARQQQQQQQQQQPPPPQPQRQQHPPPPPRRTRPEDGGPGAASTSAAAMATVGERRPLPSPEVMLGQSWNLWVEASKLPGKDGTELDESFKEFGKNREVMGLCREDMPIFGFCPAHDDFYLVVCNDCNQVVKPQAFQSHYERRHSSSSKPPLAVPPTSVFSFFPSLSKSKGGSASGSNRSSSGGVLSASSSSSKLLKSPKEKLQLRGNTRPMHPIQQSRVPHGRIMTPSVKVEKIHPKMDGTLLKSAVGPTCPATVSSLVKPGLNCPSIPKPTLPSPGQILNGKGLPAPPTLEKKPEDNSNNRKFLNKRLSEREFDPDIHCGVIDLDTKKPCTRSLTCKTHSLTQRRAVQGRRKRFDVLLAEHKNKTREKELIRHPDSQQPPQPLRDPHPAPPRTSQEPHQNPHGVIPSESKPFVASKPKPHTPSLPRPPGCPAQQGGSAPIDPPPVHESPHPPLPATEPASRLSSEEGEGDDKEESVEKLDCHYSGHHPQPASFCTFGSRQIGRGYYVFDSRWNRLRCALNLMVEKHLNAQLWKKIPPVPSTTSPISTRIPHRTNSVPTSQCGVSYLAAATVSTSPVLLSSTCISPNSKSVPAHGTTLNAQPAASGAMDPVCSMQSRQVSSSSSSPSTPSGLSSVPSSPMSRKPQKLKSSKSLRPKESSGNSTNCQNASSSTSGGSGKKRKNSSPLLVHSSSSSSSSSSSSHSMESFRKNCVAHSGPPYPSTVTSSHSIGLNCVTNKANAVNVRHDQSGRGPPTGSPAESIKRMSVMVNSSDSTLSLGPFIHQSNELPVNSHGSFSHSHTPLDKLIGKKRKCSPSSSSINNSSSKPTKVAKVPAVNNVHMKHTGTIPGAQGLMNSSLLHQPKARP.

Over residues 1-15 the composition is skewed to basic and acidic residues; sequence MSERAADDVRGEPRR. 2 disordered regions span residues 1–74 and 195–247; these read MSER…SAAA and SKGG…SRVP. A compositionally biased stretch (low complexity) spans 16–38; the sequence is AAAAAGGAAAAAARQQQQQQQQQ. The span at 39–55 shows a compositional bias: pro residues; it reads QPPPPQPQRQQHPPPPP. The span at 195–222 shows a compositional bias: low complexity; that stretch reads SKGGSASGSNRSSSGGVLSASSSSSKLL. A Glycyl lysine isopeptide (Lys-Gly) (interchain with G-Cter in SUMO); alternate cross-link involves residue K257. Residue K257 forms a Glycyl lysine isopeptide (Lys-Gly) (interchain with G-Cter in SUMO2); alternate linkage. Disordered regions lie at residues 298 to 328, 389 to 505, 616 to 730, and 818 to 892; these read PTLPSPGQILNGKGLPAPPTLEKKPEDNSNN, HKNK…ESVE, KSVP…SSHS, and SHGS…KARP. 2 stretches are compositionally biased toward basic and acidic residues: residues 318–327 and 389–403; these read LEKKPEDNSN and HKNKTREKELIRHPD. One can recognise an SCA7 domain in the interval 334–401; that stretch reads KRLSEREFDP…KTREKELIRH (68 aa). 3 stretches are compositionally biased toward pro residues: residues 405–419, 448–458, and 468–483; these read QQPPQPLRDPHPAPP, HTPSLPRPPGC, and IDPPPVHESPHPPLPA. The segment covering 493-502 has biased composition (acidic residues); the sequence is EEGEGDDKEE. Over residues 616–629 the composition is skewed to polar residues; sequence KSVPAHGTTLNAQP. The span at 640–669 shows a compositional bias: low complexity; that stretch reads SMQSRQVSSSSSSPSTPSGLSSVPSSPMSR. Residues 670-680 are compositionally biased toward basic residues; sequence KPQKLKSSKSL. A compositionally biased stretch (polar residues) spans 685-695; sequence SSGNSTNCQNA. Composition is skewed to low complexity over residues 716 to 730 and 840 to 851; these read HSSSSSSSSSSSSHS and SPSSSSINNSSS.

It belongs to the ataxin-7 family. As to quaternary structure, component of the SAGA transcription coactivator-HAT complex, at least composed of SUPT3H, GCN5L2, TAF5L, TAF6L, SUPT7L, TADA3L, TAD1L, TAF10, TAF12, TRRAP, TAF9 and ATXN7. The STAGA core complex is associated with a subcomplex required for histone deubiquitination composed of ATXN7L3, ENY2 and USP22. Interacts with SORBS1, PSMC1 and CRX. Interacts with TRRAP, GCN5L2 and TAF10. Interacts with alpha tubulin. In terms of processing, proteolytically cleaved by caspase-7 (CASP7). The cleavage may be involved in SCA7 degeneration: the isoform fragments may exert distinct toxic influences that could contribute to selective neurodegeneration. Sumoylation decreases the aggregation propensity and cellular toxicity of forms with an expanded poly-Gln region but has no effect on subcellular location or interaction with components of the STAGA complex. As to expression, isoform a is expressed in CNS, but is expressed predominantly in the peripherical tissues. Isoform b is expressed in CNS. Also highly expressed in the frontal lobe, skeletal muscle and spinal cord and is expressed at a lower level in the lung, lymphoblast and intestine.

It localises to the nucleus. The protein resides in the nucleolus. The protein localises to the nucleus matrix. Its subcellular location is the cytoplasm. It is found in the cytoskeleton. Functionally, acts as a component of the SAGA (aka STAGA) transcription coactivator-HAT complex. Mediates the interaction of SAGA complex with the CRX and is involved in CRX-dependent gene activation. Probably involved in tethering the deubiquitination module within the SAGA complex. Necessary for microtubule cytoskeleton stabilization. Involved in neurodegeneration. The protein is Ataxin-7 (ATXN7) of Homo sapiens (Human).